A 785-amino-acid polypeptide reads, in one-letter code: B-cell scaffold protein with ankyrin repeats (785 aa).

The segment at methionine 1–isoleucine 154 is interaction with ITPR2. The TIR domain occupies asparagine 25 to isoleucine 153. A DBB domain is found at valine 200 to leucine 327. ANK repeat units follow at residues glutamate 342 to alanine 371 and glutamate 378 to isoleucine 408. Disordered regions lie at residues proline 433–serine 480, glycine 493–proline 514, glutamine 538–tyrosine 578, and phenylalanine 606–glutamate 625. Residues glutamate 553–glutamate 568 show a composition bias toward basic and acidic residues. The segment covering lysine 569–tyrosine 578 has biased composition (acidic residues). Over residues proline 611–isoleucine 621 the composition is skewed to pro residues.

As to quaternary structure, interacts with LYN, ITPR1 and ITPR2. Phosphorylated on tyrosines upon BCR activation. As to expression, expressed in B-cell but not T-cell or myeloid cell lines. Highest expression in CD19(+) B-cells, with very low expression in other cell populations.

Its function is as follows. Involved in B-cell receptor (BCR)-induced Ca(2+) mobilization from intracellular stores. Promotes Lyn-mediated phosphorylation of IP3 receptors 1 and 2. This is B-cell scaffold protein with ankyrin repeats (BANK1) from Homo sapiens (Human).